We begin with the raw amino-acid sequence, 231 residues long: Flagellar L-ring protein (231 aa).

An N-terminal signal peptide occupies residues 1–18 (MNRLMIVSLLGIATALGG). The N-palmitoyl cysteine moiety is linked to residue cysteine 19. The S-diacylglycerol cysteine moiety is linked to residue cysteine 19. The disordered stretch occupies residues 118-141 (LSLSAEYGGSRDAKGDSQAGQSNS).

This sequence belongs to the FlgH family. The basal body constitutes a major portion of the flagellar organelle and consists of four rings (L,P,S, and M) mounted on a central rod.

The protein localises to the cell outer membrane. The protein resides in the bacterial flagellum basal body. Functionally, assembles around the rod to form the L-ring and probably protects the motor/basal body from shearing forces during rotation. This Pseudomonas aeruginosa (strain UCBPP-PA14) protein is Flagellar L-ring protein.